Reading from the N-terminus, the 139-residue chain is Nucleoside diphosphate kinase (139 aa).

6 residues coordinate ATP: lysine 10, phenylalanine 58, arginine 86, threonine 92, arginine 103, and asparagine 113. Histidine 116 (pros-phosphohistidine intermediate) is an active-site residue.

It belongs to the NDK family. In terms of assembly, homotetramer. It depends on Mg(2+) as a cofactor.

The protein resides in the cytoplasm. The enzyme catalyses a 2'-deoxyribonucleoside 5'-diphosphate + ATP = a 2'-deoxyribonucleoside 5'-triphosphate + ADP. The catalysed reaction is a ribonucleoside 5'-diphosphate + ATP = a ribonucleoside 5'-triphosphate + ADP. Major role in the synthesis of nucleoside triphosphates other than ATP. The ATP gamma phosphate is transferred to the NDP beta phosphate via a ping-pong mechanism, using a phosphorylated active-site intermediate. The protein is Nucleoside diphosphate kinase of Oleidesulfovibrio alaskensis (strain ATCC BAA-1058 / DSM 17464 / G20) (Desulfovibrio alaskensis).